Consider the following 251-residue polypeptide: Segregation and condensation protein A (251 aa).

Belongs to the ScpA family. Component of a cohesin-like complex composed of ScpA, ScpB and the Smc homodimer, in which ScpA and ScpB bind to the head domain of Smc. The presence of the three proteins is required for the association of the complex with DNA.

Its subcellular location is the cytoplasm. In terms of biological role, participates in chromosomal partition during cell division. May act via the formation of a condensin-like complex containing Smc and ScpB that pull DNA away from mid-cell into both cell halves. The protein is Segregation and condensation protein A of Clostridium botulinum (strain Alaska E43 / Type E3).